The chain runs to 219 residues: Protein-L-isoaspartate O-methyltransferase (219 aa).

Ser-64 is a catalytic residue.

It belongs to the methyltransferase superfamily. L-isoaspartyl/D-aspartyl protein methyltransferase family.

Its subcellular location is the cytoplasm. It carries out the reaction [protein]-L-isoaspartate + S-adenosyl-L-methionine = [protein]-L-isoaspartate alpha-methyl ester + S-adenosyl-L-homocysteine. Catalyzes the methyl esterification of L-isoaspartyl residues in peptides and proteins that result from spontaneous decomposition of normal L-aspartyl and L-asparaginyl residues. It plays a role in the repair and/or degradation of damaged proteins. This chain is Protein-L-isoaspartate O-methyltransferase, found in Chlorobaculum parvum (strain DSM 263 / NCIMB 8327) (Chlorobium vibrioforme subsp. thiosulfatophilum).